Consider the following 343-residue polypeptide: uncharacterized protein (343 aa).

Disordered regions lie at residues 1–27 (MIRE…ERMT) and 205–247 (SGGL…SKRQ). The span at 16 to 27 (RARDSRAQERMT) shows a compositional bias: basic and acidic residues. Residues 219–228 (GQDDGNTDDG) are compositionally biased toward acidic residues. A compositionally biased stretch (basic and acidic residues) spans 229–247 (NDVHQKGRGEVESKTSKRQ).

Dispensable for normal development and fertility. This is an uncharacterized protein from Bos taurus (Bovine).